Reading from the N-terminus, the 155-residue chain is Interleukin-2 (155 aa).

Positions 1-20 (MYKMQLLSCIALTLVLVANS) are cleaved as a signal peptide. An O-linked (GalNAc...) threonine glycan is attached at Thr-23. An intrachain disulfide couples Cys-79 to Cys-127.

This sequence belongs to the IL-2 family.

The protein localises to the secreted. In terms of biological role, cytokine produced by activated CD4-positive helper T-cells and to a lesser extend activated CD8-positive T-cells and natural killer (NK) cells that plays pivotal roles in the immune response and tolerance. Binds to a receptor complex composed of either the high-affinity trimeric IL-2R (IL2RA/CD25, IL2RB/CD122 and IL2RG/CD132) or the low-affinity dimeric IL-2R (IL2RB and IL2RG). Interaction with the receptor leads to oligomerization and conformation changes in the IL-2R subunits resulting in downstream signaling starting with phosphorylation of JAK1 and JAK3. In turn, JAK1 and JAK3 phosphorylate the receptor to form a docking site leading to the phosphorylation of several substrates including STAT5. This process leads to activation of several pathways including STAT, phosphoinositide-3-kinase/PI3K and mitogen-activated protein kinase/MAPK pathways. Functions as a T-cell growth factor and can increase NK-cell cytolytic activity as well. Promotes strong proliferation of activated B-cells and subsequently immunoglobulin production. Plays a pivotal role in regulating the adaptive immune system by controlling the survival and proliferation of regulatory T-cells, which are required for the maintenance of immune tolerance. Moreover, participates in the differentiation and homeostasis of effector T-cell subsets, including Th1, Th2, Th17 as well as memory CD8-positive T-cells. In Halichoerus grypus (Gray seal), this protein is Interleukin-2 (IL2).